We begin with the raw amino-acid sequence, 229 residues long: Peptidase E (229 aa).

Active-site charge relay system residues include serine 120, aspartate 135, and histidine 157.

Belongs to the peptidase S51 family.

It localises to the cytoplasm. The catalysed reaction is Dipeptidase E catalyzes the hydrolysis of dipeptides Asp-|-Xaa. It does not act on peptides with N-terminal Glu, Asn or Gln, nor does it cleave isoaspartyl peptides.. Its function is as follows. Hydrolyzes dipeptides containing N-terminal aspartate residues. May play a role in allowing the cell to use peptide aspartate to spare carbon otherwise required for the synthesis of the aspartate family of amino acids. This is Peptidase E from Salmonella paratyphi C (strain RKS4594).